The primary structure comprises 390 residues: S-adenosylmethionine synthase 1 (390 aa).

A Mg(2+)-binding site is contributed by Glu9. His15 lines the ATP pocket. Glu43 contributes to the K(+) binding site. L-methionine is bound by residues Glu56 and Gln99. ATP contacts are provided by residues 167–169, 235–238, Asp246, 252–253, Ala269, Lys273, and Lys277; these read DGK, SGRF, and RK. Asp246 contacts L-methionine. An L-methionine-binding site is contributed by Lys277.

The protein belongs to the AdoMet synthase family. As to quaternary structure, homotetramer. Mn(2+) serves as cofactor. The cofactor is Mg(2+). Co(2+) is required as a cofactor. Requires K(+) as cofactor.

It localises to the cytoplasm. It carries out the reaction L-methionine + ATP + H2O = S-adenosyl-L-methionine + phosphate + diphosphate. The protein operates within amino-acid biosynthesis; S-adenosyl-L-methionine biosynthesis; S-adenosyl-L-methionine from L-methionine: step 1/1. Its function is as follows. Catalyzes the formation of S-adenosylmethionine from methionine and ATP. The reaction comprises two steps that are both catalyzed by the same enzyme: formation of S-adenosylmethionine (AdoMet) and triphosphate, and subsequent hydrolysis of the triphosphate. The polypeptide is S-adenosylmethionine synthase 1 (SAMS1) (Nicotiana tabacum (Common tobacco)).